We begin with the raw amino-acid sequence, 644 residues long: Anti-sigma-I factor RsgI3 (644 aa).

Topologically, residues 1–56 are cytoplasmic; sequence MDNIGVIIKIEGNEAIVMTDDCSFKKVPIKDGMHPGQKILVPNNEVIQKENKSIKR. One can recognise a RsgI N-terminal anti-sigma domain in the interval 3–50; sequence NIGVIIKIEGNEAIVMTDDCSFKKVPIKDGMHPGQKILVPNNEVIQKE. Residues 57-77 traverse the membrane as a helical segment; sequence ISAVATGIAAVFLMVLSLIWI. The Extracellular portion of the chain corresponds to 78–644; that stretch reads NKPGRPDGIY…VVPSKNLFAD (567 aa). Residues 302–328 are compositionally biased toward polar residues; it reads PTNTPSISTKPSATPAENPTPKLTQKP. The segment at 302-359 is disordered; the sequence is PTNTPSISTKPSATPAENPTPKLTQKPTPVPAKTGERTSTTPTPTPAPTVRNGTGSGL. PA14 domains are found at residues 354–491 and 502–640; these read GTGS…PSSQ and KDVN…PSKN.

In terms of assembly, interacts (via RsgI N-terminal anti-sigma domain) with SigI3.

It localises to the cell membrane. Its function is as follows. Anti-sigma factor for SigI3. Negatively regulates SigI3 activity through direct interaction. Binding of the polysaccharide substrate to the extracellular C-terminal sensing domain of RsgI3 may induce a conformational change in its N-terminal cytoplasmic region, leading to the release and activation of SigI3. In Acetivibrio thermocellus (strain ATCC 27405 / DSM 1237 / JCM 9322 / NBRC 103400 / NCIMB 10682 / NRRL B-4536 / VPI 7372) (Clostridium thermocellum), this protein is Anti-sigma-I factor RsgI3.